A 226-amino-acid chain; its full sequence is Ribose-5-phosphate isomerase A (226 aa).

Substrate is bound by residues 26-29, 82-85, and 95-98; these read TGST, DGAD, and KGGG. The Proton acceptor role is filled by glutamate 104. Lysine 122 contacts substrate.

It belongs to the ribose 5-phosphate isomerase family. As to quaternary structure, homodimer.

The enzyme catalyses aldehydo-D-ribose 5-phosphate = D-ribulose 5-phosphate. Its pathway is carbohydrate degradation; pentose phosphate pathway; D-ribose 5-phosphate from D-ribulose 5-phosphate (non-oxidative stage): step 1/1. Its function is as follows. Catalyzes the reversible conversion of ribose-5-phosphate to ribulose 5-phosphate. In Streptococcus thermophilus (strain ATCC BAA-250 / LMG 18311), this protein is Ribose-5-phosphate isomerase A.